A 200-amino-acid polypeptide reads, in one-letter code: ADP-ribosylation factor-like protein 4A (200 aa).

Gly-2 carries the N-myristoyl glycine lipid modification. GTP-binding positions include 27–34 (GLDCAGKT), 75–79 (DVGGQ), and 134–137 (NKQD).

Belongs to the small GTPase superfamily. Arf family. Interacts with CYTH2. Interacts with KPNA2; the interaction is direct. Does not interact with ARL4A. Myristoylated. In terms of tissue distribution, expressed strongly in testis and liver. Expressed slightly in heart, spleen, lung and kidney.

It localises to the cell membrane. The protein resides in the cytoplasm. It is found in the nucleus. Its subcellular location is the nucleolus. In terms of biological role, small GTP-binding protein which cycles between an inactive GDP-bound and an active GTP-bound form, and the rate of cycling is regulated by guanine nucleotide exchange factors (GEF) and GTPase-activating proteins (GAP). GTP-binding protein that does not act as an allosteric activator of the cholera toxin catalytic subunit. Recruits CYTH1, CYTH2, CYTH3 and CYTH4 to the plasma membrane in GDP-bound form. This is ADP-ribosylation factor-like protein 4A (Arl4a) from Mus musculus (Mouse).